Reading from the N-terminus, the 299-residue chain is Probable plastid-lipid-associated protein 13, chloroplastic (299 aa).

The N-terminal 48 residues, 1-48 (MALIHGSVPGTSAVRLVFSTSASPSRFCLNVPVVKQGWKNSCRRRVLR), are a transit peptide targeting the chloroplast. Ala2 bears the N-acetylvaline mark.

The protein belongs to the PAP/fibrillin family.

The protein localises to the plastid. The protein resides in the chloroplast. Its subcellular location is the plastoglobule. This Arabidopsis thaliana (Mouse-ear cress) protein is Probable plastid-lipid-associated protein 13, chloroplastic (PAP13).